Consider the following 222-residue polypeptide: Physcion biosynthesis cluster O-methyltransferase (222 aa).

It belongs to the methyltransferase superfamily.

It catalyses the reaction emodin + S-adenosyl-L-methionine = physcion + S-adenosyl-L-homocysteine. The protein operates within secondary metabolite biosynthesis. O-methyltransferase; part of the gene cluster that mediates the biosynthesis of physcion, a natural anthraquinone fungicide that can prevent plant fungal infections. Within the pathway, the O-methyltransferase AcOMT catalyzes the last step by transferring a methyl group to C-6 hydroxyl of emodin to form physcion. AcOMT may also methylate the C-6 hydroxyl group of emodin anthrone to produce physcion-anthrone B. The pathway begins with the polyketide synthase AcPKS that condenses 8 malonyl-CoA units to synthesize atrochrysone thioester which is released from the synthase by the atrochrysone carboxyl ACP thioesterase AcTE that breaks the thioester bond and leads to free atrochrysone carboxylic acid. Spontaneous decarboxylation of atrochrysone carboxylic acid leads to the formation of atrochrysone. Then, atrochrysone undergoes spontaneous dehydration and oxidation, giving the products emodin anthrone and emodin. The O-methyltransferase AcOMT then methylates the C-6 hydroxyl of emodin to form physcion. This is Physcion biosynthesis cluster O-methyltransferase from Aspergillus chevalieri (Eurotium chevalieri).